Reading from the N-terminus, the 247-residue chain is Ribonuclease 3 (247 aa).

One can recognise an RNase III domain in the interval 5–147 (LIALQERLQH…LIGAVYLDAG (143 aa)). E40 lines the Mg(2+) pocket. D44 is an active-site residue. Residues 104-124 (QRRSRRRCADELQPDEAGSGG) form a disordered region. Positions 133 and 136 each coordinate Mg(2+). E136 is an active-site residue. The 71-residue stretch at 174–244 (DAKTALQEWL…AAAMLATLKA (71 aa)) folds into the DRBM domain.

This sequence belongs to the ribonuclease III family. Homodimer. Mg(2+) serves as cofactor.

It localises to the cytoplasm. It carries out the reaction Endonucleolytic cleavage to 5'-phosphomonoester.. Functionally, digests double-stranded RNA. Involved in the processing of primary rRNA transcript to yield the immediate precursors to the large and small rRNAs (23S and 16S). Processes some mRNAs, and tRNAs when they are encoded in the rRNA operon. Processes pre-crRNA and tracrRNA of type II CRISPR loci if present in the organism. The chain is Ribonuclease 3 from Verminephrobacter eiseniae (strain EF01-2).